Here is a 99-residue protein sequence, read N- to C-terminus: uncharacterized protein (99 aa).

Residues 50-77 (SAHWEDARSSGGTSPIRARAGSEGRGCQ) form a disordered region.

This is an uncharacterized protein from Homo sapiens (Human).